Here is a 251-residue protein sequence, read N- to C-terminus: Transcriptional cofactor Bfc (251 aa).

Interacts with srp (via GATA-type Zn-finger domain); this interaction enhances srp binding to the promoter of crq/croquemort.

It localises to the nucleus. Its function is as follows. Transcriptional cofactor involved in efferocytosis. Together with srp mediates expression of the phagocytic receptor crq/croquemort in response to apoptotic cells, and is up-regulated by crq/croquemort in a positive feedback mechanism. Involved in macrophage engulfment and clearance of apoptotic cells during embryogenesis. The sequence is that of Transcriptional cofactor Bfc from Drosophila melanogaster (Fruit fly).